A 368-amino-acid polypeptide reads, in one-letter code: 3-dehydroquinate synthase (368 aa).

NAD(+)-binding positions include 109-113 (GVIGD), 133-134 (TS), Lys146, Lys155, and 173-176 (TLQT). The Zn(2+) site is built by Glu188, His253, and His270.

Belongs to the sugar phosphate cyclases superfamily. Dehydroquinate synthase family. The cofactor is Co(2+). It depends on Zn(2+) as a cofactor. Requires NAD(+) as cofactor.

It is found in the cytoplasm. It catalyses the reaction 7-phospho-2-dehydro-3-deoxy-D-arabino-heptonate = 3-dehydroquinate + phosphate. It functions in the pathway metabolic intermediate biosynthesis; chorismate biosynthesis; chorismate from D-erythrose 4-phosphate and phosphoenolpyruvate: step 2/7. Catalyzes the conversion of 3-deoxy-D-arabino-heptulosonate 7-phosphate (DAHP) to dehydroquinate (DHQ). This is 3-dehydroquinate synthase from Synechococcus sp. (strain ATCC 27144 / PCC 6301 / SAUG 1402/1) (Anacystis nidulans).